The sequence spans 432 residues: Trigger factor (432 aa).

Positions 161-246 constitute a PPIase FKBP-type domain; sequence GKRVSIDFVG…VNKVEARQLP (86 aa).

It belongs to the FKBP-type PPIase family. Tig subfamily.

It is found in the cytoplasm. It catalyses the reaction [protein]-peptidylproline (omega=180) = [protein]-peptidylproline (omega=0). Its function is as follows. Involved in protein export. Acts as a chaperone by maintaining the newly synthesized protein in an open conformation. Functions as a peptidyl-prolyl cis-trans isomerase. The chain is Trigger factor from Vibrio vulnificus (strain YJ016).